We begin with the raw amino-acid sequence, 361 residues long: tRNA/tmRNA (uracil-C(5))-methyltransferase (361 aa).

S-adenosyl-L-methionine is bound by residues Gln-183, Tyr-211, Asn-216, Glu-232, and Asp-294. Cys-319 acts as the Nucleophile in catalysis. Glu-353 serves as the catalytic Proton acceptor.

The protein belongs to the class I-like SAM-binding methyltransferase superfamily. RNA M5U methyltransferase family. TrmA subfamily.

The catalysed reaction is uridine(54) in tRNA + S-adenosyl-L-methionine = 5-methyluridine(54) in tRNA + S-adenosyl-L-homocysteine + H(+). The enzyme catalyses uridine(341) in tmRNA + S-adenosyl-L-methionine = 5-methyluridine(341) in tmRNA + S-adenosyl-L-homocysteine + H(+). Functionally, dual-specificity methyltransferase that catalyzes the formation of 5-methyluridine at position 54 (m5U54) in all tRNAs, and that of position 341 (m5U341) in tmRNA (transfer-mRNA). In Acinetobacter baumannii (strain AYE), this protein is tRNA/tmRNA (uracil-C(5))-methyltransferase.